Here is a 329-residue protein sequence, read N- to C-terminus: Flotillin-like protein FloA (329 aa).

Transmembrane regions (helical) follow at residues 4 to 24 (IGFI…FSFV) and 26 to 46 (VGLW…TLVG).

Belongs to the flotillin-like FloA family. In terms of assembly, homooligomerizes.

It localises to the cell membrane. Its subcellular location is the membrane raft. Its function is as follows. Found in functional membrane microdomains (FMM) that may be equivalent to eukaryotic membrane rafts. FMMs are highly dynamic and increase in number as cells age. Flotillins are thought to be important factors in membrane fluidity. This Staphylococcus epidermidis (strain ATCC 35984 / DSM 28319 / BCRC 17069 / CCUG 31568 / BM 3577 / RP62A) protein is Flotillin-like protein FloA.